A 263-amino-acid chain; its full sequence is Proteasome subunit alpha type-1 (263 aa).

At Met-1 the chain carries N-acetylmethionine. At Ser-110 the chain carries Phosphoserine; alternate. Ser-110 carries an O-linked (GlcNAc) serine; alternate glycan. Lys-115 participates in a covalent cross-link: Glycyl lysine isopeptide (Lys-Gly) (interchain with G-Cter in ubiquitin). Phosphoserine is present on Ser-177. A Glycyl lysine isopeptide (Lys-Gly) (interchain with G-Cter in ubiquitin) cross-link involves residue Lys-208. The tract at residues 232–263 is disordered; the sequence is FLEGLEERPQRKAQPAQPADEPAEKADEPMEH. Residues 253–263 show a composition bias toward basic and acidic residues; that stretch reads PAEKADEPMEH.

The protein belongs to the peptidase T1A family. The 26S proteasome consists of a 20S proteasome core and two 19S regulatory subunits. The 20S proteasome core is a barrel-shaped complex made of 28 subunits that are arranged in four stacked rings. The two outer rings are each formed by seven alpha subunits, and the two inner rings are formed by seven beta subunits. The proteolytic activity is exerted by three beta-subunits PSMB5, PSMB6 and PSMB7. Interacts with NOTCH3. Interacts with ZFAND1.

It is found in the cytoplasm. The protein localises to the nucleus. Component of the 20S core proteasome complex involved in the proteolytic degradation of most intracellular proteins. This complex plays numerous essential roles within the cell by associating with different regulatory particles. Associated with two 19S regulatory particles, forms the 26S proteasome and thus participates in the ATP-dependent degradation of ubiquitinated proteins. The 26S proteasome plays a key role in the maintenance of protein homeostasis by removing misfolded or damaged proteins that could impair cellular functions, and by removing proteins whose functions are no longer required. Associated with the PA200 or PA28, the 20S proteasome mediates ubiquitin-independent protein degradation. This type of proteolysis is required in several pathways including spermatogenesis (20S-PA200 complex) or generation of a subset of MHC class I-presented antigenic peptides (20S-PA28 complex). The protein is Proteasome subunit alpha type-1 of Homo sapiens (Human).